Here is an 86-residue protein sequence, read N- to C-terminus: ATP synthase subunit c (86 aa).

The next 2 helical transmembrane spans lie at 8–28 and 64–84; these read VLGCSAIGAGLAMIAGIGPGI and TTGLYGFAVAIILLFANPLLG.

This sequence belongs to the ATPase C chain family. F-type ATPases have 2 components, F(1) - the catalytic core - and F(0) - the membrane proton channel. F(1) has five subunits: alpha(3), beta(3), gamma(1), delta(1), epsilon(1). F(0) has three main subunits: a(1), b(2) and c(10-14). The alpha and beta chains form an alternating ring which encloses part of the gamma chain. F(1) is attached to F(0) by a central stalk formed by the gamma and epsilon chains, while a peripheral stalk is formed by the delta and b chains.

It localises to the cell membrane. F(1)F(0) ATP synthase produces ATP from ADP in the presence of a proton or sodium gradient. F-type ATPases consist of two structural domains, F(1) containing the extramembraneous catalytic core and F(0) containing the membrane proton channel, linked together by a central stalk and a peripheral stalk. During catalysis, ATP synthesis in the catalytic domain of F(1) is coupled via a rotary mechanism of the central stalk subunits to proton translocation. Its function is as follows. Key component of the F(0) channel; it plays a direct role in translocation across the membrane. A homomeric c-ring of between 10-14 subunits forms the central stalk rotor element with the F(1) delta and epsilon subunits. The chain is ATP synthase subunit c from Lachnoclostridium phytofermentans (strain ATCC 700394 / DSM 18823 / ISDg) (Clostridium phytofermentans).